We begin with the raw amino-acid sequence, 1659 residues long: Fatty acid synthase subunit alpha (1659 aa).

The interval 114–139 (TQAQASGGAGTIAGAGSSTAPVTAPP) is disordered. One can recognise a Carrier domain in the interval 160 to 235 (AQAFEIVRTL…AALQKTFTGQ (76 aa)). At serine 195 the chain carries O-(pantetheine 4'-phosphoryl)serine. The tract at residues 588–826 (GRSVLITGAG…LCLMFNTMCS (239 aa)) is ketoreductase (KR) domain. The Ketosynthase family 3 (KS3) domain occupies 1030 to 1575 (KQLLHEVLIQ…QKGAQTIVVH (546 aa)). Active-site for beta-ketoacyl synthase activity residues include cysteine 1217, histidine 1458, and histidine 1499. The disordered stretch occupies residues 1631 to 1659 (ETLLDPTPPQTNVDDRVARSIVQQESAEP).

It belongs to the thiolase-like superfamily. Fungal fatty acid synthetase subunit alpha family. [Alpha(6)beta(6)] hexamers of two multifunctional subunits (alpha and beta). Post-translationally, 4'-phosphopantetheine is transferred from CoA to a specific serine of the acyl carrier domain by the C-terminal PPT domain. This modification is essential for activity because fatty acids are bound in thioester linkage to the sulfhydryl of the prosthetic group.

The catalysed reaction is acetyl-CoA + n malonyl-CoA + 2n NADPH + 4n H(+) = a long-chain-acyl-CoA + n CoA + n CO2 + 2n NADP(+).. It catalyses the reaction a fatty acyl-[ACP] + malonyl-[ACP] + H(+) = a 3-oxoacyl-[ACP] + holo-[ACP] + CO2. It carries out the reaction a (3R)-hydroxyacyl-[ACP] + NADP(+) = a 3-oxoacyl-[ACP] + NADPH + H(+). It participates in secondary metabolite biosynthesis. Functionally, fatty acid synthase subunit alpha; part of the gene cluster that mediates the biosynthesis of aspercryptins, linear lipopeptides built from six amino acids including 2 highly unusual and nonproteogenic amino acids, 2-amino-octanoic acid (2aoa) and 2-amino-dodecanol (2adol). The core structure of aspercryptins is as follows: Ser/Ala-Thr-Ile/Val-2aoa-Asn-2adol. The first step of aspercryptin biosynthesis is the generation of the fatty acid precursors, octanoic and dodecanoic acids, by the FAS subunits atnF and atnM. The fatty acid precursors are likely transformed into the corresponding alpha-amino fatty acids in three steps. First, they are hydroxylated by the cytochrome P450 monooxygenase atnE, then oxidized to the corresponding alpha-keto acids by the NAD(P)-dependent oxidoreductase atnD, and finally converted to the alpha-amino fatty acids by the PLP-dependent aminotransferases atnH or atnJ. the alpha-amino fatty acids, 2-amino-octanoic and 2-amino-dodecanoic acids, are recognized, activated, and covalently tethered to the NRPS atnA by its fourth and sixth adenylation domains. The second module of atnA is the Thr module and contains an epimerase (E) domain responsible for the epimerization of Thr to D-allo-Thr. Additionally, despite atnA having only one epimerase domain, the first amino acid of aspercryptin A1 is D-Ser, suggesting that serine is either loaded directly as D-Ser on the first module or that the epimerase domain in the threonine module epimerizes both L-Ser and L-Thr. After condensation of the hexapeptide of aspercryptin, the C-terminal reductase (TE) domain might be involved in the reductive release and production of the aldehyde hexapeptide. Further reduction would generate aspercryptins. The variety of aspercryptins produced reflects the flexibility of the atnA NRPS, allowing incorporation of alanine instead of serine, valine for isoleucine, and a C10 fatty amino alcohol instead of the C12 version. AtnB seems to be involved in the selectivity for Ile versus Val by the third module. Moreover, type B, C and D aspercryptins have an additional N-terminal cichorine, acetyl and propionyl group respectively. The polypeptide is Fatty acid synthase subunit alpha (Emericella nidulans (strain FGSC A4 / ATCC 38163 / CBS 112.46 / NRRL 194 / M139) (Aspergillus nidulans)).